The following is a 546-amino-acid chain: Chaperonin GroEL (546 aa).

Residues 30 to 33 (TLGP), Lys51, 87 to 91 (DGTTT), Gly415, 479 to 481 (NAA), and Asp495 contribute to the ATP site. Residues 527–546 (EEKPDVSASSGGMGGMGGMM) are disordered. Residues 537-546 (GGMGGMGGMM) show a composition bias toward gly residues.

The protein belongs to the chaperonin (HSP60) family. In terms of assembly, forms a cylinder of 14 subunits composed of two heptameric rings stacked back-to-back. Interacts with the co-chaperonin GroES.

It is found in the cytoplasm. It catalyses the reaction ATP + H2O + a folded polypeptide = ADP + phosphate + an unfolded polypeptide.. Its function is as follows. Together with its co-chaperonin GroES, plays an essential role in assisting protein folding. The GroEL-GroES system forms a nano-cage that allows encapsulation of the non-native substrate proteins and provides a physical environment optimized to promote and accelerate protein folding. The polypeptide is Chaperonin GroEL (Baumannia cicadellinicola subsp. Homalodisca coagulata).